Reading from the N-terminus, the 98-residue chain is NADH-ubiquinone oxidoreductase chain 4L (98 aa).

3 helical membrane passes run 1 to 21 (MTPT…GMLI), 29 to 49 (SLLC…LIAL), and 61 to 81 (IILL…LVSI).

The protein belongs to the complex I subunit 4L family. As to quaternary structure, core subunit of respiratory chain NADH dehydrogenase (Complex I) which is composed of 45 different subunits.

The protein resides in the mitochondrion inner membrane. It catalyses the reaction a ubiquinone + NADH + 5 H(+)(in) = a ubiquinol + NAD(+) + 4 H(+)(out). Its function is as follows. Core subunit of the mitochondrial membrane respiratory chain NADH dehydrogenase (Complex I) which catalyzes electron transfer from NADH through the respiratory chain, using ubiquinone as an electron acceptor. Part of the enzyme membrane arm which is embedded in the lipid bilayer and involved in proton translocation. This chain is NADH-ubiquinone oxidoreductase chain 4L (MT-ND4L), found in Macaca maura (Moor macaque).